The chain runs to 500 residues: L-arabinose isomerase (500 aa).

E306, E333, H350, and H450 together coordinate Mn(2+).

Belongs to the arabinose isomerase family. In terms of assembly, homohexamer. Mn(2+) serves as cofactor.

It catalyses the reaction beta-L-arabinopyranose = L-ribulose. It functions in the pathway carbohydrate degradation; L-arabinose degradation via L-ribulose; D-xylulose 5-phosphate from L-arabinose (bacterial route): step 1/3. Its function is as follows. Catalyzes the conversion of L-arabinose to L-ribulose. In Yersinia pseudotuberculosis serotype I (strain IP32953), this protein is L-arabinose isomerase.